Reading from the N-terminus, the 359-residue chain is Tropomodulin-1 (359 aa).

The disordered stretch occupies residues glutamate 36–proline 61. Residues proline 39–histidine 138 are tropomyosin-binding.

It belongs to the tropomodulin family. In terms of assembly, binds to the N-terminus of tropomyosin and to actin. Interacts with FLII.

The protein localises to the cytoplasm. It is found in the cytoskeleton. Its function is as follows. Blocks the elongation and depolymerization of the actin filaments at the pointed end. The Tmod/TM complex contributes to the formation of the short actin protofilament, which in turn defines the geometry of the membrane skeleton. This Rattus norvegicus (Rat) protein is Tropomodulin-1 (Tmod1).